A 616-amino-acid chain; its full sequence is General alpha-glucoside permease (616 aa).

Residues 1-115 (MKNIISLVSK…AALWSILVST (115 aa)) lie on the Cytoplasmic side of the membrane. Residues 15–27 (SKNEDKNISESSR) are compositionally biased toward basic and acidic residues. The interval 15–40 (SKNEDKNISESSRDIVNQQEVFNTED) is disordered. Residues 116-136 (TLVMEGYDTALLSALYALPVF) form a helical membrane-spanning segment. Topologically, residues 137 to 160 (QRKFGTLNGEGSYEITSQWQIGLN) are extracellular. The chain crosses the membrane as a helical span at residues 161–181 (MCVLCGEMIGLQITTYMVEFM). Residues 182-191 (GNRYTMITAL) lie on the Cytoplasmic side of the membrane. The helical transmembrane segment at 192–212 (GLLTAYIFILYYCKSLAMIAV) threads the bilayer. Topologically, residues 213-214 (GQ) are extracellular. A helical membrane pass occupies residues 215 to 235 (ILSAIPWGCFQSLAVTYASEV). Residues 236–242 (CPLALRY) are Cytoplasmic-facing. The chain crosses the membrane as a helical span at residues 243 to 263 (YMTSYSNICWLFGQIFASGIM). Residues 264–278 (KNSQENLGNSDLGYK) are Extracellular-facing. A helical transmembrane segment spans residues 279 to 299 (LPFALQWIWPAPLMIGIFFAP). The Cytoplasmic segment spans residues 300-373 (ESPWWLVRKD…VNGRRTRLAC (74 aa)). The helical transmembrane segment at 374-394 (LTWVAQNSSGAVLLGYSTYFF) threads the bilayer. The Extracellular portion of the chain corresponds to 395–404 (ERAGMATDKA). A helical transmembrane segment spans residues 405–425 (FTFSLIQYCLGLAGTLCSWVI). The Cytoplasmic segment spans residues 426–433 (SGRVGRWT). Residues 434–454 (ILTYGLAFQMVCLFIIGGMGF) traverse the membrane as a helical segment. Topologically, residues 455-466 (GSGSSASNGAGG) are extracellular. Residues 467–487 (LLLALSFFYNAGIGAVVYCIV) form a helical membrane-spanning segment. Topologically, residues 488–504 (AEIPSAELRTKTIVLAR) are cytoplasmic. A helical membrane pass occupies residues 505-525 (ICYNLMAVINAILTPYMLNVS). The Extracellular segment spans residues 526–532 (DWNWGAK). The helical transmembrane segment at 533–553 (TGLYWGGFTAVTLAWVIIDLP) threads the bilayer. Residues 554-616 (ETTGRTFSEI…QRELNAADKC (63 aa)) are Cytoplasmic-facing. A disordered region spans residues 587 to 616 (GKTQHDSLADESISQSSSIKQRELNAADKC). The span at 606-616 (KQRELNAADKC) shows a compositional bias: basic and acidic residues.

This sequence belongs to the major facilitator superfamily. Sugar transporter (TC 2.A.1.1) family.

It is found in the cell membrane. In terms of biological role, high-affinity uptake of alpha-glucosides such as maltose, turanose, isomaltose, alpha-methylglucoside, maltotriose, palatinose, trehalose, melezitose and glucose. Acts with the concomitant transport of protons into the cell (symport system). Provides an alternative and minor mechanism for growth on trehalose carbon source by transporting trehalose into the cytoplasm for conversion to glucose by neutral trehalase NTH1. The sequence is that of General alpha-glucoside permease from Saccharomyces cerevisiae (strain CEN.PK113-7D) (Baker's yeast).